A 782-amino-acid chain; its full sequence is Host cell factor homolog hcf-1 (782 aa).

Positions 1 to 25 (MDEDVGLEATNYSRGDESRSEEQEK) are disordered. Over residues 14–25 (RGDESRSEEQEK) the composition is skewed to basic and acidic residues. Kelch repeat units follow at residues 55-103 (LIVI…SLGN), 105-151 (IYRF…RIGH), 161-222 (KAYV…IYEK), 227-271 (RMVV…PRSL), and 280-324 (KMFV…VPLH). Phosphoserine is present on residues serine 423, serine 431, and serine 449. Over residues 423–434 (SPIKRATTSPRK) the composition is skewed to polar residues. Positions 423-553 (SPIKRATTSP…EENGDDDLPW (131 aa)) are disordered. 2 stretches are compositionally biased toward polar residues: residues 456-469 (TAPSIISTQGTTYT) and 496-513 (TASPKRSNDAQSADSSTC). Position 498 is a phosphoserine (serine 498). The span at 537 to 552 (GETDEMKEENGDDDLP) shows a compositional bias: acidic residues.

In terms of assembly, interacts with daf-16/FOXO. Interacts with deacetylase sir-2.1. Interacts with the 14-3-3 family proteins ftt-2 and par-5. Phosphorylated at multiple serine residues. Phosphorylation is developmentally regulated, occurring in embryos but not L1 larvae. Phosphorylation may be cell-cycle-regulated.

The protein localises to the nucleus. In terms of biological role, transcriptional coregulator. Involved in control of the cell cycle and in modulating mitotic histone phosphorylation. Plays a role in modulating lifespan by regulating the transcriptional activity of daf-16/Forkhead box protein O, in concert with protein deacetylase sir-2.1/SIRT1, and perhaps acting independently of the Insulin/IGF-1-like signaling (IIS) mediated pathway. Negatively modulates responses to environmental stresses, including oxidative stress, heat stress, and exposure to heavy metals; acting via regulation of the transcription factors daf-16 and skn-1. May play a role in pharyngeal development via positive modulation of expression of sup-35. In Caenorhabditis elegans, this protein is Host cell factor homolog hcf-1.